A 237-amino-acid chain; its full sequence is CD63 antigen (237 aa).

Residues 1–11 are Cytoplasmic-facing; it reads MAVEGGMKCVK. A helical membrane pass occupies residues 12–32; sequence FLLYVLLLVFCACAVGLIAVG. Over 33–51 the chain is Extracellular; the sequence is VGTHLVLNQTITHGATPSF. N40 is a glycosylation site (N-linked (GlcNAc...) asparagine). Residues 52 to 72 traverse the membrane as a helical segment; it reads LLPVVIIAVGAFLFLVAFVGC. Residues 73–81 are Cytoplasmic-facing; the sequence is CGACKENYC. The helical transmembrane segment at 82-102 threads the bilayer; it reads LMITFAIFLSLIMLVEVAAAI. Over 103–202 the chain is Extracellular; sequence AGYVFRDKVR…KIAAWLRKNV (100 aa). 3 N-linked (GlcNAc...) asparagine glycosylation sites follow: N130, N150, and N171. Residues 203–223 form a helical membrane-spanning segment; sequence LVVAAAALGIAFVEILGIVLA. Residues 224-237 are Cytoplasmic-facing; the sequence is CCLVKSIRSGYEVM. The Lysosomal targeting motif signature appears at 233 to 237; that stretch reads GYEVM.

This sequence belongs to the tetraspanin (TM4SF) family. Interacts with TIMP1 and ITGB1 and recruits TIMP1 to ITGB1. Interacts with CD9. Identified in a complex with CD9 and ITGB3. Interacts with PMEL. Interacts with KDR/VEGFR2; identified in a complex with ITGB1 and KDR/VEGFR2 and is required to recruit KDR to ITGB1 complexes. Interacts with SYT7. Palmitoylated at a low, basal level in unstimulated platelets. The level of palmitoylation increases when platelets are activated by thrombin (in vitro).

The protein localises to the cell membrane. It is found in the lysosome membrane. It localises to the late endosome membrane. Its subcellular location is the endosome. The protein resides in the multivesicular body. The protein localises to the melanosome. It is found in the secreted. It localises to the extracellular exosome. Its subcellular location is the cell surface. In terms of biological role, functions as a cell surface receptor for TIMP1 and plays a role in the activation of cellular signaling cascades. Plays a role in the activation of ITGB1 and integrin signaling, leading to the activation of AKT, FAK/PTK2 and MAP kinases. Promotes cell survival, reorganization of the actin cytoskeleton, cell adhesion, spreading and migration, via its role in the activation of AKT and FAK/PTK2. Plays a role in VEGFA signaling via its role in regulating the internalization of KDR/VEGFR2. Plays a role in intracellular vesicular transport processes, and is required for normal trafficking of the PMEL luminal domain that is essential for the development and maturation of melanocytes. Plays a role in the adhesion of leukocytes onto endothelial cells via its role in the regulation of SELP trafficking. May play a role in mast cell degranulation in response to Ms4a2/FceRI stimulation, but not in mast cell degranulation in response to other stimuli. This Bos taurus (Bovine) protein is CD63 antigen (CD63).